A 365-amino-acid polypeptide reads, in one-letter code: S-adenosylmethionine:tRNA ribosyltransferase-isomerase (365 aa).

It belongs to the QueA family. Monomer.

Its subcellular location is the cytoplasm. The enzyme catalyses 7-aminomethyl-7-carbaguanosine(34) in tRNA + S-adenosyl-L-methionine = epoxyqueuosine(34) in tRNA + adenine + L-methionine + 2 H(+). The protein operates within tRNA modification; tRNA-queuosine biosynthesis. In terms of biological role, transfers and isomerizes the ribose moiety from AdoMet to the 7-aminomethyl group of 7-deazaguanine (preQ1-tRNA) to give epoxyqueuosine (oQ-tRNA). The protein is S-adenosylmethionine:tRNA ribosyltransferase-isomerase of Rickettsia peacockii (strain Rustic).